Reading from the N-terminus, the 352-residue chain is MSSSKKGSDRNQIRKSLRKLKKQIGELEKLESPDRLNNVKPIFIKRNIYLKKKLKKKVKDHGIFCSCSLDPGSSTLCGSDCNCGILLSSCSSSCKCSSECTNKPFQQRHIKKMKLVQTEKCGYGIVADEDINSGEFIIEYVGEVIDDKICEERLWKLNHKVETNFYLCQINWNMVIDATHKGNKSRYINHSCSPNTEMQKWIIDGETRIGIFATRFINKGEQLTYDYQFVQFGADQDCYCGAVCCRKKLGAKPCKTKNTTLEEAVKPVACKVTWKTPKLLNSEVRETNLDASGQAWNNHSQRKICCRDCIGAYYTAQMKVLTLVVDIFQVMYEDGVTEIIDMCREVWKVVTA.

The AWS domain occupies 60-109 (DHGIFCSCSLDPGSSTLCGSDCNCGILLSSCSSSCKCSSECTNKPFQQRH). Residues 111 to 228 (KKMKLVQTEK…KGEQLTYDYQ (118 aa)) form the SET domain. A Post-SET domain is found at 234-250 (ADQDCYCGAVCCRKKLG).

It belongs to the class V-like SAM-binding methyltransferase superfamily. Histone-lysine methyltransferase family. SET2 subfamily.

The protein localises to the nucleus. Its subcellular location is the chromosome. It is found in the centromere. The catalysed reaction is L-lysyl-[histone] + S-adenosyl-L-methionine = N(6)-methyl-L-lysyl-[histone] + S-adenosyl-L-homocysteine + H(+). Functionally, histone methyltransferase. The polypeptide is Putative histone-lysine N-methyltransferase ASHH4 (ASHH4) (Arabidopsis thaliana (Mouse-ear cress)).